A 366-amino-acid chain; its full sequence is DENN domain-containing protein 10 (366 aa).

Residues 1 to 147 enclose the uDENN domain; it reads MATSISLEDS…RVFNRGQFDV (147 aa). Residues 169 to 309 form the cDENN domain; the sequence is IKDIIQLFGE…EEITDQNVIK (141 aa). The 56-residue stretch at 311–366 folds into the dDENN domain; the sequence is LNLKMKELLTKLESLKETNEETGKSSITLESLETRKLPNGMSTFLFNIANAEGLNG.

This sequence belongs to the DENND10 family.

The protein localises to the late endosome. In terms of biological role, guanine nucleotide exchange factor (GEF) which may be involved in the regulation of homeostasis of late endocytic pathway, including endosomal positioning, maturation and secretion. This is DENN domain-containing protein 10 (dennd10) from Dictyostelium discoideum (Social amoeba).